The chain runs to 163 residues: Peptide deformylase (163 aa).

Residues C91 and H133 each contribute to the Fe cation site. Residue E134 is part of the active site. H137 is a binding site for Fe cation.

It belongs to the polypeptide deformylase family. Fe(2+) serves as cofactor.

The enzyme catalyses N-terminal N-formyl-L-methionyl-[peptide] + H2O = N-terminal L-methionyl-[peptide] + formate. Its function is as follows. Removes the formyl group from the N-terminal Met of newly synthesized proteins. Requires at least a dipeptide for an efficient rate of reaction. N-terminal L-methionine is a prerequisite for activity but the enzyme has broad specificity at other positions. The polypeptide is Peptide deformylase (Lachnoclostridium phytofermentans (strain ATCC 700394 / DSM 18823 / ISDg) (Clostridium phytofermentans)).